The chain runs to 278 residues: MKSILQQPIWRYYDQSISAKQRSPLESFATDDTLCQLVGQLVSPPTIRTWVHEASVVLGIQDHRLPYVQQGMDLLESRGYQPIVRNSGGLAVVLDEGILNISIVLSEQMDSLSINDGYDVMVDLVKGLFPEVAEKIEAYEIVGSYCPGSYDLSIEGKKFAGISQRRLRQGVAVQIYLCIEGSGSQRAALIRDFYEESLQQEETKFNYPQIVPEVMASLSELVDLHLTVEGVVIRLQQLLHRLAGEVHPESFHDEELTLYGFYLKRVFERNAKMLERHE.

The BPL/LPL catalytic domain maps to 41–247 (LVSPPTIRTW…LLHRLAGEVH (207 aa)). Cysteine 146 functions as the Acyl-thioester intermediate in the catalytic mechanism.

The protein belongs to the octanoyltransferase LipL family.

It catalyses the reaction N(6)-octanoyl-L-lysyl-[glycine-cleavage complex H protein] + L-lysyl-[lipoyl-carrier protein] = N(6)-octanoyl-L-lysyl-[lipoyl-carrier protein] + L-lysyl-[glycine-cleavage complex H protein]. Its pathway is protein modification; protein lipoylation via endogenous pathway; protein N(6)-(lipoyl)lysine from octanoyl-[acyl-carrier-protein]. Functionally, catalyzes the amidotransfer (transamidation) of the octanoyl moiety from octanoyl-GcvH to the lipoyl domain of the E2 subunit of lipoate-dependent enzymes. This chain is Octanoyl-[GcvH]:protein N-octanoyltransferase, found in Lysinibacillus sphaericus (strain C3-41).